A 202-amino-acid chain; its full sequence is MFTELRSKLSPPRARAGAVRPGFGERPDVDASAHFSFCQTLLEHTVSAENIPCHLPRTPGTSLTWHDSRSQRASSSRPIKLLQQPGSEIPQARLYSDHYGLYHTSPSLGGLTRPVVLWSQQDVCKWLKKHCPHNYLVYVEAFSQHAITGRALLRLNADKLQRMGLTQEAQRQEVLQQVLHLQVREEGRSLKLLSQASFGNMS.

The segment at 1–22 (MFTELRSKLSPPRARAGAVRPG) is disordered. One can recognise an SAM domain in the interval 118 to 184 (WSQQDVCKWL…LQQVLHLQVR (67 aa)).

The sequence is that of Sterile alpha motif domain-containing protein 10 from Mus musculus (Mouse).